The chain runs to 179 residues: Large ribosomal subunit protein uL5 (179 aa).

The protein belongs to the universal ribosomal protein uL5 family. In terms of assembly, part of the 50S ribosomal subunit; part of the 5S rRNA/L5/L18/L25 subcomplex. Contacts the 5S rRNA and the P site tRNA. Forms a bridge to the 30S subunit in the 70S ribosome.

Its function is as follows. This is one of the proteins that bind and probably mediate the attachment of the 5S RNA into the large ribosomal subunit, where it forms part of the central protuberance. In the 70S ribosome it contacts protein S13 of the 30S subunit (bridge B1b), connecting the 2 subunits; this bridge is implicated in subunit movement. Contacts the P site tRNA; the 5S rRNA and some of its associated proteins might help stabilize positioning of ribosome-bound tRNAs. This Idiomarina loihiensis (strain ATCC BAA-735 / DSM 15497 / L2-TR) protein is Large ribosomal subunit protein uL5.